Consider the following 424-residue polypeptide: 26S proteasome regulatory subunit 4 homolog (424 aa).

A compositionally biased stretch (basic and acidic residues) spans 1–11 (MSRDKSERDNL). Residues 1–33 (MSRDKSERDNLQDTTTINLRRRRRVKEGKAASK) form a disordered region. Residue 210–217 (GLPGTGKT) coordinates ATP.

The protein belongs to the AAA ATPase family. In terms of assembly, the 26S proteasome consists of a 20S proteasome core and two 19S regulatory subunits. The 20S proteasome core is composed of 28 subunits that are arranged in four stacked rings, resulting in a barrel-shaped structure. The two end rings are each formed by seven alpha subunits, and the two central rings are each formed by seven beta subunits. The catalytic chamber with the active sites is on the inside of the barrel.

The protein resides in the cytoplasm. It is found in the nucleus. Functionally, acts as a regulatory subunit of the 26S proteasome which degrades poly-ubiquitinated proteins in the cytoplasm and in the nucleus. It is essential for the regulated turnover of proteins and for the removal of misfolded proteins. The proteasome is a multicatalytic proteinase complex that is characterized by its ability to cleave peptides with Arg, Phe, Tyr, Leu, and Glu adjacent to the leaving group at neutral or slightly basic pH. This Encephalitozoon cuniculi (strain GB-M1) (Microsporidian parasite) protein is 26S proteasome regulatory subunit 4 homolog (RPT2).